A 261-amino-acid polypeptide reads, in one-letter code: Eukaryotic translation initiation factor 3 subunit J-A (261 aa).

The span at methionine 1–alanine 11 shows a compositional bias: low complexity. The disordered stretch occupies residues methionine 1–proline 113. Residues alanine 4–valine 72 form a sufficient for interaction with EIF3B region. Phosphoserine occurs at positions 14, 16, and 23. Residues glutamate 43–glutamate 64 are compositionally biased toward acidic residues. Positions glutamate 65–lysine 109 are enriched in basic and acidic residues. A coiled-coil region spans residues lysine 73–threonine 138. Lysine 109 participates in a covalent cross-link: Glycyl lysine isopeptide (Lys-Gly) (interchain with G-Cter in SUMO2). Threonine 112 bears the Phosphothreonine mark. At serine 130 the chain carries Phosphoserine. The tract at residues tyrosine 246–methionine 261 is promotes stable association with the 40S ribosome. At tyrosine 257 the chain carries Phosphotyrosine.

The protein belongs to the eIF-3 subunit J family. Component of the eukaryotic translation initiation factor 3 (eIF-3) complex, which is composed of 13 subunits: EIF3A, EIF3B, EIF3C, EIF3D, EIF3E, EIF3F, EIF3G, EIF3H, EIF3I, EIF3J, EIF3K, EIF3L and EIF3M. The eIF-3 complex appears to include 3 stable modules: module A is composed of EIF3A, EIF3B, EIF3G and EIF3I; module B is composed of EIF3F, EIF3H, and EIF3M; and module C is composed of EIF3C, EIF3D, EIF3E, EIF3K and EIF3L. EIF3C of module C binds EIF3B of module A and EIF3H of module B, thereby linking the three modules. EIF3J is a labile subunit that binds to the eIF-3 complex via EIF3B. The eIF-3 complex interacts with RPS6KB1 under conditions of nutrient depletion. Mitogenic stimulation leads to binding and activation of a complex composed of MTOR and RPTOR, leading to phosphorylation and release of RPS6KB1 and binding of EIF4B to eIF-3. Post-translationally, phosphorylated. Phosphorylation is enhanced upon serum stimulation.

The protein resides in the cytoplasm. Its function is as follows. Component of the eukaryotic translation initiation factor 3 (eIF-3) complex, which is required for several steps in the initiation of protein synthesis. The eIF-3 complex associates with the 40S ribosome and facilitates the recruitment of eIF-1, eIF-1A, eIF-2:GTP:methionyl-tRNAi and eIF-5 to form the 43S pre-initiation complex (43S PIC). The eIF-3 complex stimulates mRNA recruitment to the 43S PIC and scanning of the mRNA for AUG recognition. The eIF-3 complex is also required for disassembly and recycling of post-termination ribosomal complexes and subsequently prevents premature joining of the 40S and 60S ribosomal subunits prior to initiation. The eIF-3 complex specifically targets and initiates translation of a subset of mRNAs involved in cell proliferation, including cell cycling, differentiation and apoptosis, and uses different modes of RNA stem-loop binding to exert either translational activation or repression. This subunit binds directly within the mRNA entry channel of the 40S ribosome to the aminoacyl (A) site. It may regulate the interaction between the 43S PIC and mRNA. This chain is Eukaryotic translation initiation factor 3 subunit J-A (Eif3j1), found in Mus musculus (Mouse).